The chain runs to 282 residues: Deoxyribonuclease-1 (282 aa).

The first 22 residues, 1-22 (MRGTRLMGLLLALAGLLQLGLS), serve as a signal peptide directing secretion. Asn-40 carries N-linked (GlcNAc...) asparagine glycosylation. The active site involves Glu-100. The cysteines at positions 123 and 126 are disulfide-linked. His-156 is a catalytic residue. Cysteines 195 and 231 form a disulfide.

The protein belongs to the DNase I family. The cofactor is Ca(2+). It depends on Mg(2+) as a cofactor. The only differences between the A and B forms and the C and D forms are in the compositions of the carbohydrate bound to Asn-40.

The protein localises to the secreted. Its subcellular location is the zymogen granule. It is found in the nucleus envelope. It carries out the reaction Endonucleolytic cleavage to 5'-phosphodinucleotide and 5'-phosphooligonucleotide end-products.. Serum endocuclease secreted into body fluids by a wide variety of exocrine and endocrine organs. Expressed by non-hematopoietic tissues and preferentially cleaves protein-free DNA. Among other functions, seems to be involved in cell death by apoptosis. Binds specifically to G-actin and blocks actin polymerization. Together with DNASE1L3, plays a key role in degrading neutrophil extracellular traps (NETs). NETs are mainly composed of DNA fibers and are released by neutrophils to bind pathogens during inflammation. Degradation of intravascular NETs by DNASE1 and DNASE1L3 is required to prevent formation of clots that obstruct blood vessels and cause organ damage following inflammation. The chain is Deoxyribonuclease-1 (DNASE1) from Bos taurus (Bovine).